Reading from the N-terminus, the 64-residue chain is Putative neurotoxin 6 (64 aa).

The signal sequence occupies residues 1–24 (MKNKFAALVITLFVLVLAIDNVTT).

It belongs to the scolopendra neurotoxin 6 family. In terms of processing, contains 3 disulfide bonds. As to expression, expressed by the venom gland.

Its subcellular location is the secreted. The protein is Putative neurotoxin 6 of Scolopendra mutilans (Chinese red-headed centipede).